Consider the following 559-residue polypeptide: 5-epiaristolochene synthase (559 aa).

Mg(2+) is bound by residues Asp312, Asp316, Asp455, Thr459, and Glu463. The DDXXD motif motif lies at 312 to 316; that stretch reads DDTYD.

This sequence belongs to the terpene synthase family. Monomer. It depends on Mg(2+) as a cofactor. As to expression, expressed only in treated leaves an not detected in control leaves.

It localises to the cytoplasm. It carries out the reaction (2E,6E)-farnesyl diphosphate = (+)-5-epi-aristolochene + diphosphate. It functions in the pathway secondary metabolite biosynthesis; terpenoid biosynthesis. In terms of biological role, catalyzes the cyclization of trans,trans-farnesyl diphosphate (FPP) to the bicyclic intermediate 5-epi-aristolochene, initial step in the conversion of FPP to the sesquiterpenoid antifungal phytoalexin capsidiol. Produces germacrene A as an enzyme-bound intermediate that is not released by the enzyme, but is further cyclized to produce the bicyclic 5-epi-aristolochene. This Capsicum annuum (Capsicum pepper) protein is 5-epiaristolochene synthase (EAS).